The sequence spans 187 residues: Large ribosomal subunit protein bL17 (187 aa).

The segment at 122-187 (PKVRSSRTST…EADAAEKSDK (66 aa)) is disordered. Residues 127-144 (SRTSTATAPVAAAPVAEA) show a composition bias toward low complexity. Residues 145-157 (PAEESDVPVEETD) show a composition bias toward acidic residues. Positions 167–176 (AETTDAAAAE) are enriched in low complexity.

This sequence belongs to the bacterial ribosomal protein bL17 family. In terms of assembly, part of the 50S ribosomal subunit. Contacts protein L32.

The sequence is that of Large ribosomal subunit protein bL17 from Clavibacter sepedonicus (Clavibacter michiganensis subsp. sepedonicus).